A 465-amino-acid chain; its full sequence is MSALKKRKITEKQPETNSDSEAESVSSRGSAKDETQTSGEEPAPAKSFKELGIIDQLCEACENMGYKAPTPIQSQAIPLALEGRDVIGLAETGSGKTAAFALPMLQALMEAPQTLFGLVLAPTRELAYQISQAFETLGSTIGVRCAVIVGGMDMVAQSIALGKKPHIIVATPGRLLDHLENTKGFSLRNLKYLAIDEADRLLDMDFGESLDKIIRILPRTRHTYLFSATMSTKVESLQRASLSNPVRVSVSSKYQTVSTLQSSYICIPHKHKNLYLVYLLNEFAGQSAIIFTTTVHETQRVAFMLRALGFGAIPLHGQLSQSARLGALGKFRSRSRDILVATDVAARGLDIPSVDVVFNFDLPMDSKTYIHRVGRTARAGKSGVAISFVTQYDVEVWLRIEHALSKKLPEYQVEKDEVMVMSERVAEASRQATIEMKSFDEKKGARGKKFGKGKRSRDDMDQEEG.

The interval 1–46 (MSALKKRKITEKQPETNSDSEAESVSSRGSAKDETQTSGEEPAPAK) is disordered. Positions 15–29 (ETNSDSEAESVSSRG) are enriched in polar residues. Residues 46–74 (KSFKELGIIDQLCEACENMGYKAPTPIQS) carry the Q motif motif. The Helicase ATP-binding domain occupies 77–248 (IPLALEGRDV…RASLSNPVRV (172 aa)). An ATP-binding site is contributed by 90 to 97 (AETGSGKT). The DEAD box motif lies at 196 to 199 (DEAD). The region spanning 275-419 (YLVYLLNEFA…EYQVEKDEVM (145 aa)) is the Helicase C-terminal domain. The tract at residues 436-465 (MKSFDEKKGARGKKFGKGKRSRDDMDQEEG) is disordered. Positions 445-455 (ARGKKFGKGKR) are enriched in basic residues.

The protein belongs to the DEAD box helicase family. DDX47/RRP3 subfamily. Interacts with the SSU processome.

The protein localises to the nucleus. The enzyme catalyses ATP + H2O = ADP + phosphate + H(+). Its function is as follows. ATP-dependent rRNA helicase required for pre-ribosomal RNA processing. Involved in the maturation of the 35S-pre-rRNA and to its cleavage to mature 18S rRNA. The chain is ATP-dependent rRNA helicase rrp3 from Emericella nidulans (strain FGSC A4 / ATCC 38163 / CBS 112.46 / NRRL 194 / M139) (Aspergillus nidulans).